The following is a 1046-amino-acid chain: MDPKRPTFPSPPGVIRAPWQQSTEDQSQLLDQPSLGRARGLIMPIDEPLPGRGRAFSVPGEMPVRFGRGITQSIAAEPLVGMARGVRLPMEEGGFGRGRGFLLPTPEPTVGIGRGAAIGPVPTLDIQKAEVEEKMPELQAEVAPTVAKVGSPGTGSSLVSMFRGLGIEPGKTWGRGAAPVGRGAAGDMGADLQPKPTIIGASLTPEREEVRSEESISFLGRGFTGFGRAAMPHMTVGRGPIGPLSPSPSVAAPFSLISASSASEDAPVAPGTPPKVEVKIETVKEPLQKIGTKGSPIPIGSNYIPICCKNDAVFQYHVTFTPNVESLSMRFGMMKEHRPTTGEVVAFDGSILYLPKRLEEVVHLKAERKTDNQEIDIKIQLTKILPPSSDLCIPFYNVVLRRVMKILGLKLVGRNHYDPNAVVILGKHRLQVWPGYSTSIKHTDGGLYLVVDVSHKVLRNDSVLDVMNLIYQGSRESFQDECTKEFVGSIVITRYNNRTYRIDDIEWSKSPKDTFTLADGSVTTFVDYYRKNYGITIKELDQPLLIHRPKERSRPGGKVITGEILLLPELSFMTGIPEKMRKDFRAMKDLTMHINVGAQQHTQSLKQLLHNINSNNEALSELGRWGLSISQEILVTQGRTLPSETICLHSASFVTSPAVDWSRELVRDPSISTVPLNCWAVFYPRRATDQAEELVTTFSRVAGPMGMRVERPIRVELRDDRTETFVKSIHSQLTSEPRVQLVVCIMTGNRDDLYSAIKKLCCIQSPVPSQAINVRTISQPQKLRSVAQKILLQINCKLGGELWTVNVPLKYLMVIGVDVHHDTSKKSRSVMGFVASLNSMLTKWYSRVTFQMPNEEIINGFRVCLLAALQKYYEVNHAFPEKIVIYRDGVSDGQLKTVEHYEIPQILKCFETIPNYEPKLAFIVVQKRISTTLYSYGSDHFGTPSPGTVLDHTVTNRDWVDFYLMAHSIRQGCGLPTHYITVYNTANLTPDHLQRLTFKMCHLYWNWPGTIRVPAPCKYAHKLAFLSGQYLHSEPAIQLSEKLFFL.

A compositionally biased stretch (pro residues) spans 1 to 12; that stretch reads MDPKRPTFPSPP. The interval 1–35 is disordered; that stretch reads MDPKRPTFPSPPGVIRAPWQQSTEDQSQLLDQPSL. Residues 19–31 are compositionally biased toward polar residues; that stretch reads WQQSTEDQSQLLD. A PAZ domain is found at 462-575; the sequence is SVLDVMNLIY…LLPELSFMTG (114 aa). The 292-residue stretch at 741 to 1032 folds into the Piwi domain; that stretch reads LVVCIMTGNR…LAFLSGQYLH (292 aa). Catalysis depends on residues Asp818, Glu856, Asp888, and His1021.

The protein belongs to the argonaute family. Piwi subfamily. As to quaternary structure, component of the PET complex. It depends on Mg(2+) as a cofactor. In terms of processing, methylated on arginine residues; required for the interaction with Tudor domain-containing protein and subsequent localization to the meiotic nuage, also named P granule. In terms of tissue distribution, detected in primordial germ cells (PGCs) from 3 dpf. In adult, it is found in both the female and male gonad. In the ovary, it is present in all stages of germ cell differentiation. In testis, it is present in mitotic and meiotic germ cells. No protein has been detected in the fully differentiated sperm cell.

It localises to the cytoplasm. The protein resides in the nucleus. Its function is as follows. Endoribonuclease that plays a central role during spermatogenesis by repressing transposable elements and preventing their mobilization, which is essential for the germline integrity. Plays an essential role in germ cell differentiation and meiosis, independently of the function in transposable elements repression. Acts via the piRNA metabolic process, which mediates the repression of transposable elements during meiosis by forming complexes composed of piRNAs and Piwi proteins and govern the methylation and subsequent repression of transposons. During piRNA biosynthesis, plays a key role in the piRNA amplification loop, also named ping-pong amplification cycle, by acting as a 'slicer-competent' piRNA endoribonuclease that cleaves primary piRNAs, which are then loaded onto 'slicer-incompetent' piwil4. Piwil2 slicing produces a pre-miRNA intermediate, which is then processed in mature piRNAs, and as well as a 16 nucleotide by-product that is degraded. Required for piwil4/miwi2 nuclear localization and association with secondary piRNAs antisense. Represses circadian rhythms by promoting the stability and activity of core clock components BMAL1 and CLOCK. The polypeptide is Piwi-like protein 2 (piwil2) (Danio rerio (Zebrafish)).